Reading from the N-terminus, the 424-residue chain is UDP-N-acetylglucosamine 1-carboxyvinyltransferase (424 aa).

Residue 22-23 coordinates phosphoenolpyruvate; that stretch reads KN. Position 93 (R93) interacts with UDP-N-acetyl-alpha-D-glucosamine. Residue C117 is the Proton donor of the active site. At C117 the chain carries 2-(S-cysteinyl)pyruvic acid O-phosphothioketal. Residues 122-126, 162-165, D307, and I329 contribute to the UDP-N-acetyl-alpha-D-glucosamine site; these read RPVDL and KVSV.

This sequence belongs to the EPSP synthase family. MurA subfamily.

The protein localises to the cytoplasm. It catalyses the reaction phosphoenolpyruvate + UDP-N-acetyl-alpha-D-glucosamine = UDP-N-acetyl-3-O-(1-carboxyvinyl)-alpha-D-glucosamine + phosphate. It functions in the pathway cell wall biogenesis; peptidoglycan biosynthesis. In terms of biological role, cell wall formation. Adds enolpyruvyl to UDP-N-acetylglucosamine. The polypeptide is UDP-N-acetylglucosamine 1-carboxyvinyltransferase (Haemophilus influenzae (strain 86-028NP)).